The primary structure comprises 284 residues: Bifunctional protein FolD (284 aa).

NADP(+) contacts are provided by residues 163 to 165 and S188; that span reads GRS.

Belongs to the tetrahydrofolate dehydrogenase/cyclohydrolase family. In terms of assembly, homodimer.

It catalyses the reaction (6R)-5,10-methylene-5,6,7,8-tetrahydrofolate + NADP(+) = (6R)-5,10-methenyltetrahydrofolate + NADPH. The enzyme catalyses (6R)-5,10-methenyltetrahydrofolate + H2O = (6R)-10-formyltetrahydrofolate + H(+). Its pathway is one-carbon metabolism; tetrahydrofolate interconversion. Functionally, catalyzes the oxidation of 5,10-methylenetetrahydrofolate to 5,10-methenyltetrahydrofolate and then the hydrolysis of 5,10-methenyltetrahydrofolate to 10-formyltetrahydrofolate. In Lactococcus lactis subsp. lactis (strain IL1403) (Streptococcus lactis), this protein is Bifunctional protein FolD.